Consider the following 348-residue polypeptide: Ferredoxin--NADP reductase (348 aa).

8 residues coordinate FAD: Thr26, Glu45, Gln53, Tyr58, Ala98, Phe133, Asp299, and Ser340.

The protein belongs to the ferredoxin--NADP reductase type 2 family. As to quaternary structure, homodimer. It depends on FAD as a cofactor.

It catalyses the reaction 2 reduced [2Fe-2S]-[ferredoxin] + NADP(+) + H(+) = 2 oxidized [2Fe-2S]-[ferredoxin] + NADPH. This chain is Ferredoxin--NADP reductase, found in Prosthecochloris aestuarii (strain DSM 271 / SK 413).